A 490-amino-acid chain; its full sequence is Betaine aldehyde dehydrogenase (490 aa).

The K(+) site is built by Thr26, Ile27, and Asp93. 150–152 (GAW) lines the NAD(+) pocket. The Charge relay system role is filled by Lys162. 176 to 179 (KPSE) contacts NAD(+). Residue Val180 coordinates K(+). NAD(+) is bound at residue 230–233 (GVAS). K(+) is bound at residue Leu246. The active-site Proton acceptor is Glu252. NAD(+) is bound by residues Gly254, Cys286, and Glu387. Cys286 (nucleophile) is an active-site residue. Cys286 carries the cysteine sulfenic acid (-SOH) modification. K(+) is bound by residues Lys457 and Gly460. Glu464 serves as the catalytic Charge relay system.

Belongs to the aldehyde dehydrogenase family. As to quaternary structure, dimer of dimers. K(+) is required as a cofactor.

The enzyme catalyses betaine aldehyde + NAD(+) + H2O = glycine betaine + NADH + 2 H(+). It participates in amine and polyamine biosynthesis; betaine biosynthesis via choline pathway; betaine from betaine aldehyde: step 1/1. Involved in the biosynthesis of the osmoprotectant glycine betaine. Catalyzes the irreversible oxidation of betaine aldehyde to the corresponding acid. The chain is Betaine aldehyde dehydrogenase from Escherichia coli O45:K1 (strain S88 / ExPEC).